A 253-amino-acid chain; its full sequence is UPF0174 protein jhp_1494 (253 aa).

This sequence belongs to the UPF0174 family.

The polypeptide is UPF0174 protein jhp_1494 (Helicobacter pylori (strain J99 / ATCC 700824) (Campylobacter pylori J99)).